Reading from the N-terminus, the 65-residue chain is SCOCO-like protein 1 (65 aa).

Residues 8-44 are a coiled coil; sequence RSLMEQKAMELQQQLQALLDEIDQNKQESENISRESE.

This sequence belongs to the SLO1 family.

The chain is SCOCO-like protein 1 from Schizosaccharomyces pombe (strain 972 / ATCC 24843) (Fission yeast).